The following is a 736-amino-acid chain: Dynamin-1-like protein (736 aa).

Methionine 1 bears the N-acetylmethionine mark. A Dynamin-type G domain is found at 22-302 (IIQLPQIVVV…LMHHIRDCLP (281 aa)). A G1 motif region spans residues 32–39 (GTQSSGKS). A GTP-binding site is contributed by 32-40 (GTQSSGKSS). The segment at 58–60 (VTR) is G2 motif. The tract at residues 146–149 (DLPG) is G3 motif. Positions 215–218 (TKLD) are G4 motif. GTP contacts are provided by residues 215 to 221 (TKLDLMD) and 246 to 249 (NRSQ). A G5 motif region spans residues 245 to 248 (VNRS). The middle domain stretch occupies residues 344 to 489 (YCNTIEGTAK…NEMVHNLVAI (146 aa)). An interaction with GSK3B region spans residues 448 to 685 (NYSTQELLRF…NHVKDTLQSE (238 aa)). Residues 502 to 569 (ADACGLMNNN…IQDNRRETKN (68 aa)) are b domain. Positions 522–554 (RELPSAGSRDKSSKVPSALAPASQEPPPAASAE) are disordered. Phosphoserine is present on serine 529. Residues lysine 532, lysine 535, lysine 558, and lysine 568 each participate in a glycyl lysine isopeptide (Lys-Gly) (interchain with G-Cter in SUMO) cross-link. The interval 542 to 736 (PASQEPPPAA…IAEIRETHLW (195 aa)) is C-terminal dimerization domain. Positions 566-588 (ETKNVPSAGGGIGDGGQEPTTGN) are disordered. O-linked (GlcNAc) threonine glycosylation is found at threonine 585 and threonine 586. Lysine 594 participates in a covalent cross-link: Glycyl lysine isopeptide (Lys-Gly) (interchain with G-Cter in SUMO). N6-acetyllysine; alternate is present on lysine 597. Lysine 597 participates in a covalent cross-link: Glycyl lysine isopeptide (Lys-Gly) (interchain with G-Cter in SUMO); alternate. A Glycyl lysine isopeptide (Lys-Gly) (interchain with G-Cter in SUMO) cross-link involves residue lysine 606. Residue serine 607 is modified to Phosphoserine. Lysine 608 is covalently cross-linked (Glycyl lysine isopeptide (Lys-Gly) (interchain with G-Cter in SUMO)). Serine 616 is modified (phosphoserine; by PINK1). The residue at position 637 (serine 637) is a Phosphoserine; by CAMK1 and PKA. Cysteine 644 bears the S-nitrosocysteine mark. Residues 644–735 (CEVIERLIKS…IIAEIRETHL (92 aa)) enclose the GED domain. Residues 654–668 (YFLIVRKNIQDSVPK) are important for homodimerization.

It belongs to the TRAFAC class dynamin-like GTPase superfamily. Dynamin/Fzo/YdjA family. As to quaternary structure, homotetramer; dimerizes through the N-terminal GTP-middle region of one molecule binding to the GED domain of another DNM1L molecule. Oligomerizes in a GTP-dependent manner to form membrane-associated tubules with a spiral pattern. Interacts with GSK3B and MARCHF5. Interacts (via the GTPase and B domains) with UBE2I; the interaction promotes sumoylation of DNM1L, mainly in its B domain. Interacts with PPP3CA; the interaction dephosphorylates DNM1L and regulates its transition to mitochondria. Interacts with BCL2L1 isoform BCL-X(L) and CLTA; DNM1L and BCL2L1 isoform BCL-X(L) may form a complex in synaptic vesicles that also contains clathrin and MFF. Interacts with MFF; the interaction is inhibited by C11orf65/MFI. Interacts with FIS1. Interacts with MIEF2 and MIEF1; GTP-dependent, regulates GTP hydrolysis and DNM1L oligomerization. Interacts with PGAM5; this interaction leads to dephosphorylation at Ser-656 and activation of GTPase activity and eventually to mitochondria fragmentation. Interacts with RALBP1; during mitosis, recruits DNM1L to the mitochondrion and mediates its activation by the mitotic kinase cyclin B-CDK1. Interacts with FUNDC1; this interaction recruits DNM1L/DRP1 at ER-mitochondria contact sites. In terms of processing, phosphorylation/dephosphorylation events on two sites near the GED domain regulate mitochondrial fission. Phosphorylation on Ser-637 inhibits mitochondrial fission probably through preventing intramolecular interaction. Dephosphorylated on this site by PPP3CA which promotes mitochondrial fission. Phosphorylation on Ser-616 by Pink1 activates the GTPase activity and promotes mitochondrial fission. Phosphorylated in a circadian manner at Ser-637. Dephosphorylated by PGAM5. Sumoylated on various lysine residues within the B domain, probably by MUL1. Sumoylation positively regulates mitochondrial fission. Desumoylated by SENP5 during G2/M transition of mitosis. Appears to be linked to its catalytic activity. Post-translationally, S-nitrosylation increases DNM1L dimerization, mitochondrial fission and causes neuronal damage. In terms of processing, O-GlcNAcylation augments the level of the GTP-bound active form of DNM1L and induces translocation from the cytoplasm to mitochondria in cardiomyocytes. It also decreases phosphorylation at Ser-637. Ubiquitination by MARCHF5 affects mitochondrial morphology. As to expression, expressed in the cerebellum and in several regions of the cerebrum and diencephalon. Strongly expressed in the cerebellar Purkinje cells and in the pontile giant neurons. Widely expressed. In terms of tissue distribution, brain-specific. As to expression, brain-specific (at protein level). Expressed in most of the subregions of the brain, including the cerebellum, midbrain, hippocampus, striatum, cerebral cortex, and brain stem. Weakly expressed in the olfactory bulb.

The protein resides in the cytoplasm. Its subcellular location is the cytosol. It localises to the golgi apparatus. The protein localises to the endomembrane system. It is found in the mitochondrion outer membrane. The protein resides in the peroxisome. Its subcellular location is the membrane. It localises to the clathrin-coated pit. The protein localises to the cytoplasmic vesicle. It is found in the secretory vesicle. The protein resides in the synaptic vesicle membrane. Its subcellular location is the lysosome. It localises to the late endosome. The protein localises to the cell membrane. It is found in the postsynaptic density. The enzyme catalyses GTP + H2O = GDP + phosphate + H(+). Its function is as follows. Functions in mitochondrial and peroxisomal division. Mediates membrane fission through oligomerization into membrane-associated tubular structures that wrap around the scission site to constrict and sever the mitochondrial membrane through a GTP hydrolysis-dependent mechanism. The specific recruitment at scission sites is mediated by membrane receptors like MFF, MIEF1 and MIEF2 for mitochondrial membranes. While the recruitment by the membrane receptors is GTP-dependent, the following hydrolysis of GTP induces the dissociation from the receptors and allows DNM1L filaments to curl into closed rings that are probably sufficient to sever a double membrane. Acts downstream of PINK1 to promote mitochondrial fission in a PRKN-dependent manner. Plays an important role in mitochondrial fission during mitosis. Required for formation of endocytic vesicles. Through its function in mitochondrial division, ensures the survival of at least some types of postmitotic neurons, including Purkinje cells, by suppressing oxidative damage. Required for normal brain development, including that of cerebellum. Facilitates developmentally regulated apoptosis during neural tube formation. Required for a normal rate of cytochrome c release and caspase activation during apoptosis; this requirement may depend upon the cell type and the physiological apoptotic cues. Proposed to regulate synaptic vesicle membrane dynamics through association with BCL2L1 isoform Bcl-X(L) which stimulates its GTPase activity in synaptic vesicles; the function may require its recruitment by MFF to clathrin-containing vesicles. Required for programmed necrosis execution. Rhythmic control of its activity following phosphorylation at Ser-637 is essential for the circadian control of mitochondrial ATP production. Functionally, regulates postsynaptic clathrin-mediated endocytosis by positioning the endocytic zone at the postsynaptic density, independently of mitochondrial division. This Mus musculus (Mouse) protein is Dynamin-1-like protein.